Consider the following 316-residue polypeptide: MTNLFEHINLHPSDDRGHLLTEQVNPKSECLDQLSTESLVTLFCEEDREPQRAVAAAIPELIQAVEAITDRLRSGGRLFYLGAGTSGRLGVLDAAECPPTFCSDPDLVQGVLAGGSSALLKSSEGLEDIEQAGQKDLQQRGFSSADCLVGIAAGGTTPYVKGGLAYAKEINALAIAISCVPIEQAELPCSIDIRLLTGPELLTGSTRLKAGTATKMALNILSTCAMVRLGKVFGNRMVDVAATNIKLMDRALRILHDLADVDRDRGSELLQASDGSVKVALLMHACGLDAEAAQKLLIEQNNQLRTALASCGNCIS.

Residues 68-231 (ITDRLRSGGR…STCAMVRLGK (164 aa)) form the SIS domain. Glu-96 functions as the Proton donor in the catalytic mechanism. The active site involves Glu-127.

The protein belongs to the GCKR-like family. MurNAc-6-P etherase subfamily. Homodimer.

The catalysed reaction is N-acetyl-D-muramate 6-phosphate + H2O = N-acetyl-D-glucosamine 6-phosphate + (R)-lactate. It functions in the pathway amino-sugar metabolism; N-acetylmuramate degradation. Specifically catalyzes the cleavage of the D-lactyl ether substituent of MurNAc 6-phosphate, producing GlcNAc 6-phosphate and D-lactate. This is N-acetylmuramic acid 6-phosphate etherase from Prochlorococcus marinus (strain MIT 9303).